The primary structure comprises 281 residues: Phosphatidylglycerol--prolipoprotein diacylglyceryl transferase (281 aa).

Transmembrane regions (helical) follow at residues 23 to 43, 71 to 91, 107 to 127, and 133 to 153; these read IGPLAVHWYGLGYVVGILFAW, FVIWAALGVVLGGRIGYVLFY, WDGGMSFHGGILGTTLAMILF, and ILVWSMFDTIAAGVPIGLGVV. An a 1,2-diacyl-sn-glycero-3-phospho-(1'-sn-glycerol)-binding site is contributed by Arg-154. Helical transmembrane passes span 189–209, 217–237, and 247–267; these read LYEAFLEGLVLFFVLFVLVWG, GFVAGAFVTGYGLSRIAVEFF, and LFGGWLTMGMVLSVPMVLLGL.

Belongs to the Lgt family.

It is found in the cell inner membrane. The catalysed reaction is L-cysteinyl-[prolipoprotein] + a 1,2-diacyl-sn-glycero-3-phospho-(1'-sn-glycerol) = an S-1,2-diacyl-sn-glyceryl-L-cysteinyl-[prolipoprotein] + sn-glycerol 1-phosphate + H(+). It functions in the pathway protein modification; lipoprotein biosynthesis (diacylglyceryl transfer). Functionally, catalyzes the transfer of the diacylglyceryl group from phosphatidylglycerol to the sulfhydryl group of the N-terminal cysteine of a prolipoprotein, the first step in the formation of mature lipoproteins. The protein is Phosphatidylglycerol--prolipoprotein diacylglyceryl transferase of Brucella canis (strain ATCC 23365 / NCTC 10854 / RM-666).